An 87-amino-acid polypeptide reads, in one-letter code: uncharacterized protein (87 aa).

It to A.fulgidus AF_1348 and AF_1363.

This is an uncharacterized protein from Archaeoglobus fulgidus (strain ATCC 49558 / DSM 4304 / JCM 9628 / NBRC 100126 / VC-16).